Consider the following 89-residue polypeptide: Large ribosomal subunit protein bL27 (89 aa).

The tract at residues 1 to 21 (MAHKKAGGSSRNGRDSKGKRL) is disordered.

This sequence belongs to the bacterial ribosomal protein bL27 family.

The chain is Large ribosomal subunit protein bL27 from Bradyrhizobium sp. (strain ORS 278).